Consider the following 469-residue polypeptide: UTP--glucose-1-phosphate uridylyltransferase 2 (469 aa).

Residue Ala-2 is modified to N-acetylalanine. UTP-binding positions include 85-88 (LNGG), Lys-99, Gln-162, and Gly-191. Substrate is bound at residue 87-88 (GG). Residues His-192 and 220–222 (NSD) each bind substrate. UTP is bound by residues Asp-222 and Lys-360.

Belongs to the UDPGP type 1 family. Expressed in cauline leaves, flowers and siliques.

Its subcellular location is the cytoplasm. It carries out the reaction alpha-D-glucose 1-phosphate + UTP + H(+) = UDP-alpha-D-glucose + diphosphate. In terms of biological role, converts glucose 1-phosphate to UDP-glucose, which is the major glycosyl donor for polysaccharides. Acts redundantly with UGP1 and is essential for the synthesis of sucrose, starch and cell wall, and callose deposition. This Arabidopsis thaliana (Mouse-ear cress) protein is UTP--glucose-1-phosphate uridylyltransferase 2.